Reading from the N-terminus, the 90-residue chain is Small ribosomal subunit protein uS15c (90 aa).

The protein belongs to the universal ribosomal protein uS15 family. Part of the 30S ribosomal subunit.

It localises to the plastid. It is found in the chloroplast. The chain is Small ribosomal subunit protein uS15c (rps15) from Populus alba (White poplar).